The chain runs to 187 residues: Large ribosomal subunit protein uL5 (187 aa).

Belongs to the universal ribosomal protein uL5 family. As to quaternary structure, part of the 50S ribosomal subunit; part of the 5S rRNA/L5/L18/L25 subcomplex. Contacts the 5S rRNA and the P site tRNA. Forms a bridge to the 30S subunit in the 70S ribosome.

Its function is as follows. This is one of the proteins that bind and probably mediate the attachment of the 5S RNA into the large ribosomal subunit, where it forms part of the central protuberance. In the 70S ribosome it contacts protein S13 of the 30S subunit (bridge B1b), connecting the 2 subunits; this bridge is implicated in subunit movement. Contacts the P site tRNA; the 5S rRNA and some of its associated proteins might help stabilize positioning of ribosome-bound tRNAs. In Mycobacterium bovis (strain BCG / Tokyo 172 / ATCC 35737 / TMC 1019), this protein is Large ribosomal subunit protein uL5.